A 191-amino-acid chain; its full sequence is GDP-mannose pyrophosphatase (191 aa).

GDP-alpha-D-mannose is bound by residues tyrosine 17, 38–40, arginine 67, and 85–87; these read KRE and AGL. The 138-residue stretch at 43–180 folds into the Nudix hydrolase domain; the sequence is DRGNGATILL…EIRDGKTVLL (138 aa). 3 residues coordinate Mg(2+): alanine 85, glutamate 100, and glutamate 104. A Nudix box motif is present at residues 86 to 106; sequence GLLDNDEPEVCIRKEAIEETG. Residues glutamate 104, glutamate 127, 150 to 151, and lysine 176 each bind GDP-alpha-D-mannose; that span reads DE. Glutamate 151 is a binding site for Mg(2+).

The protein belongs to the Nudix hydrolase family. NudK subfamily. As to quaternary structure, homodimer. Mg(2+) serves as cofactor.

It carries out the reaction GDP-alpha-D-mannose + H2O = alpha-D-mannose 1-phosphate + GMP + 2 H(+). Nucleoside diphosphate sugar hydrolase that hydrolyzes GDP-mannose as its preferred substrate, yielding GMP and mannose-1-phosphate. The polypeptide is GDP-mannose pyrophosphatase (nudK) (Escherichia coli (strain K12 / DH10B)).